We begin with the raw amino-acid sequence, 303 residues long: Eukaryotic translation initiation factor 3 subunit G (303 aa).

Disordered regions lie at residues Met-1 to Val-32, Gly-81 to Asn-100, Pro-105 to Lys-126, and Gly-181 to Lys-215. The span at Trp-109–Lys-126 shows a compositional bias: basic and acidic residues. The RRM domain maps to Ala-223 to Lys-301.

The protein belongs to the eIF-3 subunit G family. As to quaternary structure, component of the eukaryotic translation initiation factor 3 (eIF-3) complex.

The protein resides in the cytoplasm. In terms of biological role, RNA-binding component of the eukaryotic translation initiation factor 3 (eIF-3) complex, which is involved in protein synthesis of a specialized repertoire of mRNAs and, together with other initiation factors, stimulates binding of mRNA and methionyl-tRNAi to the 40S ribosome. The eIF-3 complex specifically targets and initiates translation of a subset of mRNAs involved in cell proliferation. This subunit can bind 18S rRNA. This Pyricularia oryzae (strain 70-15 / ATCC MYA-4617 / FGSC 8958) (Rice blast fungus) protein is Eukaryotic translation initiation factor 3 subunit G.